The following is a 484-amino-acid chain: Probable cytochrome P450 555A1 (484 aa).

Residues 1-21 traverse the membrane as a helical segment; that stretch reads MIIIVIVVFLFYFSFLNLNLN. Cys-432 serves as a coordination point for heme.

It belongs to the cytochrome P450 family. The cofactor is heme.

Its subcellular location is the membrane. The chain is Probable cytochrome P450 555A1 (cyp555A1) from Dictyostelium discoideum (Social amoeba).